We begin with the raw amino-acid sequence, 261 residues long: 5'-nucleotidase SurE (261 aa).

Positions 8, 9, 43, and 96 each coordinate a divalent metal cation.

It belongs to the SurE nucleotidase family. Requires a divalent metal cation as cofactor.

The protein localises to the cytoplasm. It catalyses the reaction a ribonucleoside 5'-phosphate + H2O = a ribonucleoside + phosphate. In terms of biological role, nucleotidase that shows phosphatase activity on nucleoside 5'-monophosphates. The chain is 5'-nucleotidase SurE from Roseobacter denitrificans (strain ATCC 33942 / OCh 114) (Erythrobacter sp. (strain OCh 114)).